The primary structure comprises 210 residues: Dephospho-CoA kinase (210 aa).

The 199-residue stretch at 4 to 202 folds into the DPCK domain; sequence WVGLTGGIGS…AFYSGIFASK (199 aa). 12–17 is an ATP binding site; that stretch reads GSGKSA.

Belongs to the CoaE family.

The protein localises to the cytoplasm. The catalysed reaction is 3'-dephospho-CoA + ATP = ADP + CoA + H(+). Its pathway is cofactor biosynthesis; coenzyme A biosynthesis; CoA from (R)-pantothenate: step 5/5. Functionally, catalyzes the phosphorylation of the 3'-hydroxyl group of dephosphocoenzyme A to form coenzyme A. The sequence is that of Dephospho-CoA kinase from Neisseria gonorrhoeae.